A 1615-amino-acid chain; its full sequence is ABC transporter A family member 4 (1615 aa).

Transmembrane regions (helical) follow at residues 30-50 (ILLP…SMII), 233-253 (GVFI…NIVI), 278-298 (SIIS…ILSA), 308-328 (ITLI…AFIL), 337-357 (YAGL…IIIG), 365-385 (LKLL…YVWC), and 405-425 (YEII…LWYL). In terms of domain architecture, ABC transmembrane type-2 spans 182-383 (TQIQTGVDQA…PIAISVANYV (202 aa)). In terms of domain architecture, ABC transporter 1 spans 492–727 (ISIRNLRKEF…FGVGYLLTIS (236 aa)). Residue 528–535 (GPNGSGKS) participates in ATP binding. 7 helical membrane-spanning segments follow: residues 855–875 (IKSF…GLIL), 1022–1042 (FVAI…IAAS), 1075–1095 (IWDY…IIAV), 1106–1126 (YISG…LMSF), 1135–1155 (VGAI…ISFI), 1174–1194 (IIEY…ILAI), and 1218–1238 (LLPN…ILLI). One can recognise an ABC transporter 2 domain in the interval 1293 to 1528 (IIFNNLYKKF…FGSGYSIEVK (236 aa)). Residue 1331–1338 (GLNGCGKS) participates in ATP binding.

The protein belongs to the ABC transporter superfamily. ABCA family.

It is found in the membrane. This is ABC transporter A family member 4 (abcA4) from Dictyostelium discoideum (Social amoeba).